The chain runs to 171 residues: Small ribosomal subunit protein uS5 (171 aa).

The S5 DRBM domain maps to F13–I76.

It belongs to the universal ribosomal protein uS5 family. As to quaternary structure, part of the 30S ribosomal subunit. Contacts proteins S4 and S8.

With S4 and S12 plays an important role in translational accuracy. Its function is as follows. Located at the back of the 30S subunit body where it stabilizes the conformation of the head with respect to the body. The sequence is that of Small ribosomal subunit protein uS5 from Dichelobacter nodosus (strain VCS1703A).